The chain runs to 661 residues: tRNA uridine 5-carboxymethylaminomethyl modification enzyme MnmG (661 aa).

Residues glycine 16–glycine 21, valine 128, and serine 183 each bind FAD. A disordered region spans residues proline 206–phenylalanine 230. The span at serine 216–phenylalanine 230 shows a compositional bias: basic and acidic residues. Glycine 277 to phenylalanine 291 contributes to the NAD(+) binding site. Glutamine 374 contacts FAD.

This sequence belongs to the MnmG family. Homodimer. Heterotetramer of two MnmE and two MnmG subunits. FAD serves as cofactor.

The protein resides in the cytoplasm. Its function is as follows. NAD-binding protein involved in the addition of a carboxymethylaminomethyl (cmnm) group at the wobble position (U34) of certain tRNAs, forming tRNA-cmnm(5)s(2)U34. This is tRNA uridine 5-carboxymethylaminomethyl modification enzyme MnmG from Lactobacillus helveticus (strain DPC 4571).